The sequence spans 232 residues: Phosphatidylserine decarboxylase proenzyme (232 aa).

Ser190 functions as the Schiff-base intermediate with substrate; via pyruvic acid in the catalytic mechanism. Ser190 carries the post-translational modification Pyruvic acid (Ser); by autocatalysis.

Belongs to the phosphatidylserine decarboxylase family. PSD-A subfamily. In terms of assembly, heterodimer of a large membrane-associated beta subunit and a small pyruvoyl-containing alpha subunit. Pyruvate is required as a cofactor. In terms of processing, is synthesized initially as an inactive proenzyme. Formation of the active enzyme involves a self-maturation process in which the active site pyruvoyl group is generated from an internal serine residue via an autocatalytic post-translational modification. Two non-identical subunits are generated from the proenzyme in this reaction, and the pyruvate is formed at the N-terminus of the alpha chain, which is derived from the carboxyl end of the proenzyme. The post-translation cleavage follows an unusual pathway, termed non-hydrolytic serinolysis, in which the side chain hydroxyl group of the serine supplies its oxygen atom to form the C-terminus of the beta chain, while the remainder of the serine residue undergoes an oxidative deamination to produce ammonia and the pyruvoyl prosthetic group on the alpha chain.

It localises to the cell membrane. It catalyses the reaction a 1,2-diacyl-sn-glycero-3-phospho-L-serine + H(+) = a 1,2-diacyl-sn-glycero-3-phosphoethanolamine + CO2. Its pathway is phospholipid metabolism; phosphatidylethanolamine biosynthesis; phosphatidylethanolamine from CDP-diacylglycerol: step 2/2. Functionally, catalyzes the formation of phosphatidylethanolamine (PtdEtn) from phosphatidylserine (PtdSer). In Mesorhizobium japonicum (strain LMG 29417 / CECT 9101 / MAFF 303099) (Mesorhizobium loti (strain MAFF 303099)), this protein is Phosphatidylserine decarboxylase proenzyme.